We begin with the raw amino-acid sequence, 598 residues long: Peroxisomal targeting signal receptor (598 aa).

3 disordered regions span residues 1-54 (MSFM…GEMS), 135-154 (RGGS…MQGG), and 208-237 (AVGK…TTTE). Residues 9–22 (ECSTGRNPLSQFTK) show a composition bias toward polar residues. A Glycyl cysteine thioester (Cys-Gly) (interchain with G-Cter in ubiquitin) cross-link involves residue cysteine 10. Lysine 22 is covalently cross-linked (Glycyl lysine isopeptide (Lys-Gly) (interchain with G-Cter in ubiquitin)). Residues 23 to 35 (HTAEDRSLQHDRV) show a composition bias toward basic and acidic residues. A compositionally biased stretch (low complexity) spans 220-233 (AETATATETVTETE). 7 TPR repeats span residues 304 to 337 (PDPF…NTEH), 338 to 371 (AEAW…EPGN), 372 to 409 (LSAL…VVDQ), 410 to 447 (ARNQ…ANID), 448 to 481 (ADVQ…RPDD), 482 to 515 (ALLW…RPSF), and 516 to 549 (VRAR…HKVE).

The protein belongs to the peroxisomal targeting signal receptor family. In terms of processing, ubiquitination at Cys-10 is UBC4-independent but requires the presence of PEX4. Ubiquitination at Lys-22 is UBC4-dependent.

Its subcellular location is the cytoplasm. It is found in the peroxisome membrane. Functionally, binds to the C-terminal PTS1-type tripeptide peroxisomal targeting signal (SKL-type) and plays an essential role in peroxisomal protein import. The chain is Peroxisomal targeting signal receptor (PAY32) from Yarrowia lipolytica (strain CLIB 122 / E 150) (Yeast).